The chain runs to 313 residues: Nodulation protein D 3 (313 aa).

One can recognise an HTH lysR-type domain in the interval 6 to 63 (LDLNLLVALDALMTKRSVTAAARSINLSQPAMSSAIARLRSYFQDELFRMQGRELITT). The H-T-H motif DNA-binding region spans 23-42 (VTAAARSINLSQPAMSSAIA).

The protein belongs to the LysR transcriptional regulatory family.

NodD regulates the expression of the nodABCFE genes which encode other nodulation proteins. NodD is also a negative regulator of its own expression. Binds flavonoids as inducers. The sequence is that of Nodulation protein D 3 (nodD3) from Rhizobium meliloti (strain 1021) (Ensifer meliloti).